A 231-amino-acid chain; its full sequence is Ribose-5-phosphate isomerase A (231 aa).

Substrate contacts are provided by residues 32 to 35, 85 to 88, and 98 to 101; these read TGST, DGAD, and KGGG. Catalysis depends on Glu-107, which acts as the Proton acceptor. Lys-125 contacts substrate.

It belongs to the ribose 5-phosphate isomerase family. In terms of assembly, homodimer.

The catalysed reaction is aldehydo-D-ribose 5-phosphate = D-ribulose 5-phosphate. It functions in the pathway carbohydrate degradation; pentose phosphate pathway; D-ribose 5-phosphate from D-ribulose 5-phosphate (non-oxidative stage): step 1/1. Its function is as follows. Catalyzes the reversible conversion of ribose-5-phosphate to ribulose 5-phosphate. This Burkholderia orbicola (strain MC0-3) protein is Ribose-5-phosphate isomerase A.